The primary structure comprises 116 residues: MDFGLIFFIVALLKGVQCEVKLLESGGGLVQPGGSLKLSCAASGFDFSRYWMSWVRQAPGKGLEWIGEINPDSSTINYTPSLKDKFIISRDNAKNTLYLQMSKVRSEDTALYYCAR.

The signal sequence occupies residues 1–18; the sequence is MDFGLIFFIVALLKGVQC. The region spanning 19 to 116 is the Ig-like domain; the sequence is EVKLLESGGG…EDTALYYCAR (98 aa).

The polypeptide is Ig heavy chain V region 441 (Mus musculus (Mouse)).